The chain runs to 350 residues: MSFLRSFARNKDISKVGRRGIHCMQKLCAEKISPDSLEKAQNRVIDAALTLVRENTGLRKNLCHSLGGAVATSTLLGVPLGHNSSFLEGPAFAPPFIREGIWCGSANSTTEEGKDLKDLRIMVDVGDIPIQEMRDCGIGDERLMKVVSDSVKLVMEEDPLRPLILGGDPSISYPVVRAISEKLGGPVDVLHFDAHPDLYDEFEGNYYSHASSFARIMEGGYARRLLQVGIRSINKEGREQAKKFGVEQFEMRHFSKDRPFLENLNLGEGAKGVYISIDVDCLDPGYAVGVSHYESGGLSFRDVMNMLQNLKGDIVGGDVVEYNPQREPPDRMTAMVAAKFVRELAAKMSK.

Mn(2+) is bound by residues D193, H195, and D197. Substrate contacts are provided by residues H195–Y199, E203–N205, and N234. D278 and D280 together coordinate Mn(2+). E321 contacts substrate.

The protein belongs to the arginase family. It depends on Mn(2+) as a cofactor.

The catalysed reaction is L-arginine + H2O = urea + L-ornithine. The protein operates within nitrogen metabolism; urea cycle; L-ornithine and urea from L-arginine: step 1/1. The polypeptide is Arginase (AG1) (Glycine max (Soybean)).